A 367-amino-acid chain; its full sequence is TATA-box-binding protein-like (367 aa).

A disordered region spans residues Met1–Asn26. The segment covering Asn16–Asn26 has biased composition (polar residues).

Belongs to the TBP family.

The protein is TATA-box-binding protein-like of Acanthamoeba polyphaga (Amoeba).